The chain runs to 649 residues: Protein mitoshell (649 aa).

Positions 167 to 176 (LRSEARKPRP) are enriched in basic and acidic residues. Disordered stretches follow at residues 167-193 (LRSEARKPRPESVVPEESSISSLESGA), 389-414 (HGPSAFSTPNNQIRNNAASKGQEPTS), and 485-512 (ALPSQEIPNAPTPKSSPQSDRPRDVRSY). Residues 177 to 191 (ESVVPEESSISSLES) are compositionally biased toward low complexity. Polar residues-rich tracts occupy residues 393 to 414 (AFSTPNNQIRNNAASKGQEPTS) and 485 to 503 (ALPSQEIPNAPTPKSSPQS).

Required for male meiotic cytokinesis through its involvement in the regulation of mitochondrial aggregation and fusion, astral spindle assembly and contractile ring formation. This chain is Protein mitoshell, found in Drosophila melanogaster (Fruit fly).